The following is a 125-amino-acid chain: Ribosome-binding factor A (125 aa).

Belongs to the RbfA family. Monomer. Binds 30S ribosomal subunits, but not 50S ribosomal subunits or 70S ribosomes.

It localises to the cytoplasm. Its function is as follows. One of several proteins that assist in the late maturation steps of the functional core of the 30S ribosomal subunit. Associates with free 30S ribosomal subunits (but not with 30S subunits that are part of 70S ribosomes or polysomes). Required for efficient processing of 16S rRNA. May interact with the 5'-terminal helix region of 16S rRNA. The sequence is that of Ribosome-binding factor A from Xylella fastidiosa (strain M12).